We begin with the raw amino-acid sequence, 317 residues long: Homoserine O-succinyltransferase (317 aa).

Cys-142 acts as the Acyl-thioester intermediate in catalysis. The substrate site is built by Lys-163 and Ser-192. His-235 serves as the catalytic Proton acceptor. Glu-237 is a catalytic residue. Arg-249 is a binding site for substrate.

Belongs to the MetA family.

It localises to the cytoplasm. It catalyses the reaction L-homoserine + succinyl-CoA = O-succinyl-L-homoserine + CoA. It participates in amino-acid biosynthesis; L-methionine biosynthesis via de novo pathway; O-succinyl-L-homoserine from L-homoserine: step 1/1. Its function is as follows. Transfers a succinyl group from succinyl-CoA to L-homoserine, forming succinyl-L-homoserine. The chain is Homoserine O-succinyltransferase from Aeromonas hydrophila subsp. hydrophila (strain ATCC 7966 / DSM 30187 / BCRC 13018 / CCUG 14551 / JCM 1027 / KCTC 2358 / NCIMB 9240 / NCTC 8049).